The sequence spans 300 residues: Ribosomal protein L11 methyltransferase (300 aa).

Positions 152, 173, 195, and 234 each coordinate S-adenosyl-L-methionine.

This sequence belongs to the methyltransferase superfamily. PrmA family.

The protein localises to the cytoplasm. The enzyme catalyses L-lysyl-[protein] + 3 S-adenosyl-L-methionine = N(6),N(6),N(6)-trimethyl-L-lysyl-[protein] + 3 S-adenosyl-L-homocysteine + 3 H(+). Methylates ribosomal protein L11. This is Ribosomal protein L11 methyltransferase from Burkholderia multivorans (strain ATCC 17616 / 249).